A 2692-amino-acid polypeptide reads, in one-letter code: Thyroglobulin (2692 aa).

The signal sequence occupies residues M1–A19. The residue at position 24 (Y24) is an Iodotyrosine; alternate. Y24 bears the Sulfotyrosine; alternate mark. Residue Y24 is modified to Thyroxine; alternate. Y24 carries the triiodothyronine; alternate modification. Thyroglobulin type-1 domains lie at L31–C92, L93–C160, and P161–T248. 8 disulfide bridges follow: C34/C52, C63/C70, C72/C92, C96/C120, C131/C138, C140/C160, C164/C183, and C194/C235. Position 108 is an iodotyrosine (Y108). An N-linked (GlcNAc...) asparagine glycan is attached at N110. Y149 is subject to Iodotyrosine; alternate. The residue at position 149 (Y149) is a Diiodotyrosine; alternate. N198 is a glycosylation site (N-linked (GlcNAc...) asparagine). Residues Y234 and Y258 each carry the iodotyrosine modification. The region spanning P298–C358 is the Thyroglobulin type-1 4 domain. Disulfide bonds link C301-C319, C330-C336, C338-C358, C364-C621, C408-C609, C632-C637, C639-C659, C663-C688, and C699-C704. N485, N497, and N546 each carry an N-linked (GlcNAc...) asparagine glycan. Thyroglobulin type-1 domains lie at S606 to C659, P660 to C727, and P728 to C923. The residue at position 705 (Y705) is an Iodotyrosine; alternate. Y705 carries the post-translational modification Thyroxine; alternate. The residue at position 705 (Y705) is a Triiodothyronine; alternate. Y705 is subject to Diiodotyrosine; alternate. Disulfide bonds link C706–C727, C731–C764, C775–C900, C902–C923, C927–C1033, C1044–C1051, C1053–C1079, C1128–C1147, C1151–C1171, C1183–C1190, C1192–C1212, C1237–C1287, and C1262–C1278. N749 carries N-linked (GlcNAc...) asparagine glycosylation. Y786 carries the post-translational modification Iodotyrosine. N855 carries N-linked (GlcNAc...) asparagine glycosylation. The residue at position 868 (Y868) is an Iodotyrosine; alternate. Diiodotyrosine; alternate is present on Y868. At Y885 the chain carries Diiodotyrosine. N-linked (GlcNAc...) asparagine glycosylation occurs at N949. Y994 bears the Iodotyrosine; alternate mark. Y994 carries the post-translational modification Diiodotyrosine; alternate. 3 consecutive Thyroglobulin type-1 domains span residues S1021–C1079, L1088–C1147, and P1148–C1212. N1142 carries an N-linked (GlcNAc...) asparagine glycan. Y1241 carries the iodotyrosine modification. Y1241 is modified (thyroxine). 2 N-linked (GlcNAc...) asparagine glycosylation sites follow: N1296 and N1384. Intrachain disulfides connect C1372-C1392, C1395-C1406, C1409-C1423, C1426-C1443, C1447-C1456, C1476-C1498, C1535-C1559, C1539-C1545, C1571-C1594, C1656-C1681, C1660-C1666, C1665-C1766, and C1692-C1709. 3 Type II repeats span residues P1389 to Q1402, E1403 to G1419, and S1420 to G1436. Y1400 is subject to Iodotyrosine; alternate. Y1400 carries the diiodotyrosine; alternate modification. A Thyroglobulin type-1 11 domain is found at V1444–C1498. The stretch at C1535 to F1655 is one Type IIIA repeat. One copy of the Type IIIB repeat lies at C1656 to W1823. N1800 is a glycosylation site (N-linked (GlcNAc...) asparagine). 10 cysteine pairs are disulfide-bonded: C1824-C1850, C1828-C1835, C1859-C1870, C1927-C1955, C1931-C1937, C1936-C2007, C1966-C1979, C2061-C2085, C2065-C2071, and C2094-C2103. One copy of the Type IIIA repeat lies at C1824–E1926. The Type IIIB repeat unit spans residues C1927–R2060. The N-linked (GlcNAc...) asparagine glycan is linked to N1944. The Type IIIA repeat unit spans residues C2061–P2118. Y2115 carries the post-translational modification Iodotyrosine. The tract at residues D2119 to K2692 is cholinesterase-like (ChEL). 2 N-linked (GlcNAc...) asparagine glycosylation sites follow: N2181 and N2226. Position 2467 is a thyroxine (Y2467). Y2500 is modified (iodotyrosine; alternate). At Y2500 the chain carries Thyroxine; alternate. Triiodothyronine; alternate is present on Y2500. Y2500 is subject to Diiodotyrosine; alternate. An iodotyrosine mark is found at Y2514 and Y2544. A disulfide bridge links C2518 with C2642. A Diiodotyrosine modification is found at Y2624. Positions E2658–D2671 are enriched in acidic residues. The disordered stretch occupies residues E2658–K2692. An Iodotyrosine; alternate modification is found at Y2690. The residue at position 2690 (Y2690) is a Thyroxine; alternate. Y2690 carries the triiodothyronine; alternate modification. Y2690 carries the post-translational modification Diiodotyrosine; alternate.

The protein belongs to the type-B carboxylesterase/lipase family. As to quaternary structure, monomer. Homodimer (via ChEL region); occurs in the endoplasmic reticulum and is required for export to the Golgi apparatus. Homooligomer; disulfide-linked; stored in this form in the thyroid follicle lumen. Iodinated on tyrosine residues by TPO. There are 4 pairs of iodinated tyrosines used for coupling: acceptor Tyr-24 is coupled to donor Tyr-149 or Tyr-234, acceptor Tyr-2500 is coupled to donor Tyr-2467, acceptor Tyr-2690 in monomer 1 is coupled to donor Tyr-2690 in monomer 2 and acceptor Tyr-1241 in monomer 1 is coupled to donor Tyr-108 in monomer 2. In terms of processing, sulfated tyrosines are desulfated during iodination. Post-translationally, undergoes sequential proteolysis by cathepsins to release thyroxine (T4) and triiodothyronine (T3) hormones. In the thyroid follicle lumen, cross-linked TG (storage form) is solubilized by limited proteolysis mediated by cathepsins CTSB and/or CTSL. Partially cleaved TG is further processed by CTSK/cathepsin K and/or CTSL resulting in the release of T4. Following endocytosis, further processing occurs leading to the release of T3 and more T4 hormones. Expressed in thyroid epithelial cells.

It is found in the secreted. Its function is as follows. Acts as a substrate for the production of iodinated thyroid hormones thyroxine (T4) and triiodothyronine (T3). The synthesis of T3 and T4 involves iodination of selected tyrosine residues of TG/thyroglobulin followed by their oxidative coupling. Following TG re-internalization and lysosomal-mediated proteolysis, T3 and T4 are released from the polypeptide backbone leading to their secretion into the bloodstream. One dimer produces 7 thyroid hormone molecules. In Sus scrofa (Pig), this protein is Thyroglobulin.